The primary structure comprises 160 residues: Ribosome maturation factor RimP (160 aa).

It belongs to the RimP family.

Its subcellular location is the cytoplasm. In terms of biological role, required for maturation of 30S ribosomal subunits. The chain is Ribosome maturation factor RimP from Orientia tsutsugamushi (strain Boryong) (Rickettsia tsutsugamushi).